Reading from the N-terminus, the 509-residue chain is Photosystem II CP47 reaction center protein (509 aa).

The next 6 helical transmembrane spans lie at 21 to 36, 101 to 115, 140 to 156, 203 to 218, 237 to 252, and 457 to 472; these read AVHLMHTALVAGWAGS, IGLSGLLFLAAIWHW, GIHLFLSGLLCFGFGAF, IAAGIVGILAGLFHLS, VLSSSISAVFFAAFIV, and SFALIFFFGHLWHGGR.

The protein belongs to the PsbB/PsbC family. PsbB subfamily. PSII is composed of 1 copy each of membrane proteins PsbA, PsbB, PsbC, PsbD, PsbE, PsbF, PsbH, PsbI, PsbJ, PsbK, PsbL, PsbM, PsbT, PsbX, PsbY, PsbZ, Psb30/Ycf12, at least 3 peripheral proteins of the oxygen-evolving complex and a large number of cofactors. It forms dimeric complexes. Binds multiple chlorophylls. PSII binds additional chlorophylls, carotenoids and specific lipids. serves as cofactor.

It localises to the plastid. It is found in the cyanelle thylakoid membrane. Its function is as follows. One of the components of the core complex of photosystem II (PSII). It binds chlorophyll and helps catalyze the primary light-induced photochemical processes of PSII. PSII is a light-driven water:plastoquinone oxidoreductase, using light energy to abstract electrons from H(2)O, generating O(2) and a proton gradient subsequently used for ATP formation. The protein is Photosystem II CP47 reaction center protein of Cyanophora paradoxa.